A 311-amino-acid polypeptide reads, in one-letter code: Small ribosomal subunit biogenesis GTPase RsgA (311 aa).

A CP-type G domain is found at 88–246 (SKEKEQVIAA…VIDTPGIREF (159 aa)). Residues 137 to 140 (NKID) and 188 to 196 (GHSGVGKST) each bind GTP. Residues cysteine 270, cysteine 275, histidine 277, and cysteine 283 each contribute to the Zn(2+) site.

It belongs to the TRAFAC class YlqF/YawG GTPase family. RsgA subfamily. Monomer. Associates with 30S ribosomal subunit, binds 16S rRNA. It depends on Zn(2+) as a cofactor.

Its subcellular location is the cytoplasm. One of several proteins that assist in the late maturation steps of the functional core of the 30S ribosomal subunit. Helps release RbfA from mature subunits. May play a role in the assembly of ribosomal proteins into the subunit. Circularly permuted GTPase that catalyzes slow GTP hydrolysis, GTPase activity is stimulated by the 30S ribosomal subunit. The sequence is that of Small ribosomal subunit biogenesis GTPase RsgA from Chlorobaculum parvum (strain DSM 263 / NCIMB 8327) (Chlorobium vibrioforme subsp. thiosulfatophilum).